Reading from the N-terminus, the 78-residue chain is Acyl carrier protein (78 aa).

Residues serine 2–glutamine 77 enclose the Carrier domain. Serine 37 carries the O-(pantetheine 4'-phosphoryl)serine modification.

It belongs to the acyl carrier protein (ACP) family. In terms of processing, 4'-phosphopantetheine is transferred from CoA to a specific serine of apo-ACP by AcpS. This modification is essential for activity because fatty acids are bound in thioester linkage to the sulfhydryl of the prosthetic group.

Its subcellular location is the cytoplasm. The protein operates within lipid metabolism; fatty acid biosynthesis. Functionally, carrier of the growing fatty acid chain in fatty acid biosynthesis. This chain is Acyl carrier protein, found in Pseudomonas entomophila (strain L48).